A 103-amino-acid polypeptide reads, in one-letter code: uncharacterized protein (103 aa).

This is an uncharacterized protein from Caenorhabditis elegans.